Here is a 300-residue protein sequence, read N- to C-terminus: Centromere protein O (300 aa).

2 coiled-coil regions span residues 18–42 and 83–109; these read LAHLERLETQVSRSRKQSEELQSVQ and NQTVEINEQEALEEKLENVKAILQAYH. S35 is modified (phosphoserine).

The protein belongs to the CENP-O/MCM21 family. In terms of assembly, component of the CENPA-CAD complex, composed of CENPI, CENPK, CENPL, CENPO, CENPP, CENPQ, CENPR and CENPS. The CENPA-CAD complex interacts with the CENPA-NAC complex, at least composed of CENPA, CENPC, CENPH, CENPM, CENPN, CENPT and CENPU.

It localises to the nucleus. The protein resides in the chromosome. Its subcellular location is the centromere. The protein localises to the kinetochore. In terms of biological role, component of the CENPA-CAD (nucleosome distal) complex, a complex recruited to centromeres which is involved in assembly of kinetochore proteins, mitotic progression and chromosome segregation. May be involved in incorporation of newly synthesized CENPA into centromeres via its interaction with the CENPA-NAC complex. Modulates the kinetochore-bound levels of NDC80 complex. The sequence is that of Centromere protein O (CENPO) from Homo sapiens (Human).